The chain runs to 95 residues: Integration host factor subunit beta (95 aa).

Belongs to the bacterial histone-like protein family. Heterodimer of an alpha and a beta chain.

In terms of biological role, this protein is one of the two subunits of integration host factor, a specific DNA-binding protein that functions in genetic recombination as well as in transcriptional and translational control. Involved in hydrogenase gene expression. The polypeptide is Integration host factor subunit beta (ihfB) (Rhodobacter capsulatus (Rhodopseudomonas capsulata)).